The sequence spans 148 residues: Large ribosomal subunit protein bL9 (148 aa).

It belongs to the bacterial ribosomal protein bL9 family.

Functionally, binds to the 23S rRNA. The polypeptide is Large ribosomal subunit protein bL9 (Frankia casuarinae (strain DSM 45818 / CECT 9043 / HFP020203 / CcI3)).